The following is a 788-amino-acid chain: MNEKSLRVLEYFKIKDGIKKYISTSAAKKLIDELEPYGSLYEVKEHIEETKEAFELLMKKGAPPFEGAYDVTEAVSMAEKGFSLAPGQLLKVGSMLRCARKFKEYISHKEEEESYRIIEDICSGIIPLKNIEDNIFNAIIGEEEISDKASTALYSIRRSLKDKNASIKDKVNAMMRSYSKYLQENLYTIRGERYVIPVKAEYKAQVPGLVHDQSSTGATLFIEPMGLVNLNNEIKELMLKEKAEIERILRELSALIYKSIVAVKNNEKIVTELDFIFAKAKYASSINATAPHVNDKGVIDIVMGRHPLIDPAKVVPLNIYMGREFTSLVITGPNTGGKTVTLKTTGLLEVMAMSGLMIPARENSTISFFKEVYADIGDEQSIEQSLSTFSSHMTNIVRIIDDADEDSLVLFDELGAGTDPTEGAALAISILEALRKRGTKIVATTHYSELKAYALKTENVENASVEFDVETLRPTYRLLIGIPGKSNAFEISKRLGLSDYIIEEARKGISKDTLEFEDLIQNLQTRSVKAEENLRKAEFLKEQAEKFKEKYEEKVSSITETREKALHEGRREAKKIIEEAKSEADKILKDMREMERLGYSSEARQRLQESRQKLKEKLNNAEESLNISERDQGEALKSVKEGEEVFIPSLNMKGIVISTQDSKGEVGIQAGIMKINVKLKDLRKTNNNPISKKEKAVKKREARLNLKSVAQSIDLRGLDSEEAIYKTDIYLDEAYMAGLGSVTVIHGKGTGVLRNAINTMLKKNSHVKSYRLGNFGEGGTGVTVVELK.

Residue 332-339 participates in ATP binding; the sequence is GPNTGGKT. A Smr domain is found at 713–788; it reads IDLRGLDSEE…GTGVTVVELK (76 aa).

The protein belongs to the DNA mismatch repair MutS family. MutS2 subfamily. In terms of assembly, homodimer. Binds to stalled ribosomes, contacting rRNA.

Functionally, endonuclease that is involved in the suppression of homologous recombination and thus may have a key role in the control of bacterial genetic diversity. Acts as a ribosome collision sensor, splitting the ribosome into its 2 subunits. Detects stalled/collided 70S ribosomes which it binds and splits by an ATP-hydrolysis driven conformational change. Acts upstream of the ribosome quality control system (RQC), a ribosome-associated complex that mediates the extraction of incompletely synthesized nascent chains from stalled ribosomes and their subsequent degradation. Probably generates substrates for RQC. The chain is Endonuclease MutS2 from Clostridium acetobutylicum (strain ATCC 824 / DSM 792 / JCM 1419 / IAM 19013 / LMG 5710 / NBRC 13948 / NRRL B-527 / VKM B-1787 / 2291 / W).